A 338-amino-acid polypeptide reads, in one-letter code: Phenylalanine--tRNA ligase alpha subunit (338 aa).

The tract at residues 71-101 (QFEEKRSSLSQQTSSSDTYQSLPDLTLPGRQ) is disordered. Over residues 78–92 (SLSQQTSSSDTYQSL) the composition is skewed to low complexity. Glu-253 lines the Mg(2+) pocket.

The protein belongs to the class-II aminoacyl-tRNA synthetase family. Phe-tRNA synthetase alpha subunit type 1 subfamily. In terms of assembly, tetramer of two alpha and two beta subunits. Requires Mg(2+) as cofactor.

The protein localises to the cytoplasm. The enzyme catalyses tRNA(Phe) + L-phenylalanine + ATP = L-phenylalanyl-tRNA(Phe) + AMP + diphosphate + H(+). This Desulfotalea psychrophila (strain LSv54 / DSM 12343) protein is Phenylalanine--tRNA ligase alpha subunit.